A 212-amino-acid polypeptide reads, in one-letter code: MSKGFLVSLEGPEGAGKTSVLEALLPILEEKGVKVLTTREPGGVLIGEKIREVILDPSHTQMDAKTELLLYIASRRQHLVEKVLPALEAGKLVIMDRFIDSSVAYQGFGRGLDIEAIDWLNQFATDGLKPDLTLYFDIEVEEGLARIAANSDREVNRLDLEGLELHKKVRQGYLSLLEKEGNRIVKIDASLPLEQVVETTKAVLFDGMDLAK.

An ATP-binding site is contributed by 11–18 (GPEGAGKT).

This sequence belongs to the thymidylate kinase family.

The enzyme catalyses dTMP + ATP = dTDP + ADP. Its function is as follows. Phosphorylation of dTMP to form dTDP in both de novo and salvage pathways of dTTP synthesis. In Streptococcus pneumoniae (strain CGSP14), this protein is Thymidylate kinase.